Here is an 89-residue protein sequence, read N- to C-terminus: Small ribosomal subunit protein uS17 (89 aa).

The protein belongs to the universal ribosomal protein uS17 family. As to quaternary structure, part of the 30S ribosomal subunit.

One of the primary rRNA binding proteins, it binds specifically to the 5'-end of 16S ribosomal RNA. The chain is Small ribosomal subunit protein uS17 from Ralstonia nicotianae (strain ATCC BAA-1114 / GMI1000) (Ralstonia solanacearum).